Consider the following 546-residue polypeptide: Membrane protein insertase YidC (546 aa).

Residues 6-26 (NLLLIALLFVSFMIWQAWQVD) traverse the membrane as a helical segment. Residues 30–44 (QPTAQTTQQTTNTAT) show a composition bias toward low complexity. The interval 30 to 55 (QPTAQTTQQTTNTATGDKASQAVPGS) is disordered. A run of 4 helical transmembrane segments spans residues 344–364 (KFIHSFVGNWGFSIIVITFIV), 419–439 (LGGCLPLIIQMPIFLALYYML), 457–477 (LSAQDPYYILPILMGITMYFI), and 498–518 (PVIFTVFFLWFPAGLVLYYIV).

The protein belongs to the OXA1/ALB3/YidC family. Type 1 subfamily. Interacts with the Sec translocase complex via SecD. Specifically interacts with transmembrane segments of nascent integral membrane proteins during membrane integration.

It is found in the cell inner membrane. Its function is as follows. Required for the insertion and/or proper folding and/or complex formation of integral membrane proteins into the membrane. Involved in integration of membrane proteins that insert both dependently and independently of the Sec translocase complex, as well as at least some lipoproteins. Aids folding of multispanning membrane proteins. This is Membrane protein insertase YidC from Yersinia pestis.